A 348-amino-acid polypeptide reads, in one-letter code: Mitogen-activated protein kinase 14B (348 aa).

The Protein kinase domain occupies 25–309 (YQNLSPVGSG…ASQALAHPYF (285 aa)). ATP-binding positions include 31-39 (VGSGAYGSV) and lysine 54. Residue aspartate 169 is the Proton acceptor of the active site. A Phosphothreonine; by MAP2K3 modification is found at threonine 181. The TXY motif lies at 181–183 (TGY). Tyrosine 183 carries the phosphotyrosine; by MAP2K3 modification.

Belongs to the protein kinase superfamily. CMGC Ser/Thr protein kinase family. MAP kinase subfamily. The cofactor is Mg(2+). In terms of processing, dually phosphorylated on Thr-181 and Tyr-183, which activates the enzyme.

It localises to the cytoplasm. The protein resides in the nucleus. The enzyme catalyses L-seryl-[protein] + ATP = O-phospho-L-seryl-[protein] + ADP + H(+). The catalysed reaction is L-threonyl-[protein] + ATP = O-phospho-L-threonyl-[protein] + ADP + H(+). Activated by threonine and tyrosine phosphorylation by the dual specificity kinase, MKK3. In terms of biological role, serine/threonine kinase which acts as an essential component of the MAP kinase signal transduction pathway. Mapk14b is one of the four p38 MAPKs which play an important role in the cascades of cellular responses evoked by extracellular stimuli such as pro-inflammatory cytokines or physical stress leading to direct activation of transcription factors. Accordingly, p38 MAPKs phosphorylate a broad range of proteins and it has been estimated that they may have approximately 200 to 300 substrates each. Some of the targets are downstream kinases which are activated through phosphorylation and further phosphorylate additional targets. This Danio rerio (Zebrafish) protein is Mitogen-activated protein kinase 14B (mapk14b).